Here is an 87-residue protein sequence, read N- to C-terminus: Colicin-E7 immunity protein (87 aa).

Belongs to the colicins ColE2/ColE8/ColE9 and pyocins S1/S2 family.

Its function is as follows. This protein is able to protect a cell, which harbors the plasmid ColE7 encoding colicin E7, against colicin E7, it binds specifically to the DNase-type colicin and inhibits its bactericidal activity. Dimeric ImmE7 may possess a RNase activity that cleaves its own mRNA at a specific site and thus autoregulates translational expression of the downstream ceiE7 gene as well as degradation of the upstream ceaE7 mRNA. The chain is Colicin-E7 immunity protein (imm) from Escherichia coli.